The chain runs to 635 residues: Elongation factor 4 (635 aa).

One can recognise a tr-type G domain in the interval 11–193 (EKIRNFSIIA…QIVEKVPAPT (183 aa)). GTP-binding positions include 23 to 28 (DHGKST) and 140 to 143 (NKID).

The protein belongs to the TRAFAC class translation factor GTPase superfamily. Classic translation factor GTPase family. LepA subfamily.

It is found in the cell membrane. The enzyme catalyses GTP + H2O = GDP + phosphate + H(+). Required for accurate and efficient protein synthesis under certain stress conditions. May act as a fidelity factor of the translation reaction, by catalyzing a one-codon backward translocation of tRNAs on improperly translocated ribosomes. Back-translocation proceeds from a post-translocation (POST) complex to a pre-translocation (PRE) complex, thus giving elongation factor G a second chance to translocate the tRNAs correctly. Binds to ribosomes in a GTP-dependent manner. In Streptococcus pyogenes serotype M12 (strain MGAS2096), this protein is Elongation factor 4.